Consider the following 213-residue polypeptide: Thiamine-phosphate synthase (213 aa).

Residues 40–44 (QFREK) and N75 each bind 4-amino-2-methyl-5-(diphosphooxymethyl)pyrimidine. Mg(2+) is bound by residues D76 and D95. Residue S113 participates in 4-amino-2-methyl-5-(diphosphooxymethyl)pyrimidine binding. Residue 139-141 (TPS) participates in 2-[(2R,5Z)-2-carboxy-4-methylthiazol-5(2H)-ylidene]ethyl phosphate binding. 4-amino-2-methyl-5-(diphosphooxymethyl)pyrimidine is bound at residue K142. 2-[(2R,5Z)-2-carboxy-4-methylthiazol-5(2H)-ylidene]ethyl phosphate is bound by residues G171 and 191-192 (IS).

It belongs to the thiamine-phosphate synthase family. Mg(2+) serves as cofactor.

It carries out the reaction 2-[(2R,5Z)-2-carboxy-4-methylthiazol-5(2H)-ylidene]ethyl phosphate + 4-amino-2-methyl-5-(diphosphooxymethyl)pyrimidine + 2 H(+) = thiamine phosphate + CO2 + diphosphate. The enzyme catalyses 2-(2-carboxy-4-methylthiazol-5-yl)ethyl phosphate + 4-amino-2-methyl-5-(diphosphooxymethyl)pyrimidine + 2 H(+) = thiamine phosphate + CO2 + diphosphate. The catalysed reaction is 4-methyl-5-(2-phosphooxyethyl)-thiazole + 4-amino-2-methyl-5-(diphosphooxymethyl)pyrimidine + H(+) = thiamine phosphate + diphosphate. It functions in the pathway cofactor biosynthesis; thiamine diphosphate biosynthesis; thiamine phosphate from 4-amino-2-methyl-5-diphosphomethylpyrimidine and 4-methyl-5-(2-phosphoethyl)-thiazole: step 1/1. Condenses 4-methyl-5-(beta-hydroxyethyl)thiazole monophosphate (THZ-P) and 2-methyl-4-amino-5-hydroxymethyl pyrimidine pyrophosphate (HMP-PP) to form thiamine monophosphate (TMP). This chain is Thiamine-phosphate synthase, found in Staphylococcus aureus (strain MRSA252).